The primary structure comprises 487 residues: L-tartrate/succinate antiporter (487 aa).

The next 14 membrane-spanning stretches (helical) occupy residues 10–30, 33–53, 54–74, 93–113, 137–157, 189–209, 236–256, 292–312, 313–333, 340–360, 370–390, 393–413, 418–438, and 465–485; these read YLAP…AGLE, TWLY…EPVP, GAVV…WLLF, WAVF…FMFG, TLFL…VTPS, IGSY…AIFL, FLGM…LAYV, LMVG…AAMV, GYSV…DIVS, VFFW…TGFI, SLSG…FYLL, FFAS…AAAL, IPLP…SILT, and IFGL…MPVV.

Belongs to the SLC13A/DASS transporter (TC 2.A.47) family. DIT1 subfamily.

The protein localises to the cell inner membrane. It carries out the reaction (2R,3R)-tartrate(out) + succinate(in) = (2R,3R)-tartrate(in) + succinate(out). Its function is as follows. Catalyzes the uptake of tartrate in exchange for intracellular succinate. Essential for anaerobic L-tartrate fermentation. The chain is L-tartrate/succinate antiporter (ttdT) from Shigella boydii serotype 4 (strain Sb227).